We begin with the raw amino-acid sequence, 303 residues long: 1D-myo-inositol 2-acetamido-2-deoxy-alpha-D-glucopyranoside deacetylase (303 aa).

The Zn(2+) site is built by H15, D18, and H157.

This sequence belongs to the MshB deacetylase family. It depends on Zn(2+) as a cofactor.

It carries out the reaction 1D-myo-inositol 2-acetamido-2-deoxy-alpha-D-glucopyranoside + H2O = 1D-myo-inositol 2-amino-2-deoxy-alpha-D-glucopyranoside + acetate. In terms of biological role, catalyzes the deacetylation of 1D-myo-inositol 2-acetamido-2-deoxy-alpha-D-glucopyranoside (GlcNAc-Ins) in the mycothiol biosynthesis pathway. The protein is 1D-myo-inositol 2-acetamido-2-deoxy-alpha-D-glucopyranoside deacetylase of Kribbella flavida (strain DSM 17836 / JCM 10339 / NBRC 14399).